We begin with the raw amino-acid sequence, 353 residues long: Inactive ADP-ribosyltransferase ARH2 (353 aa).

At S27 the chain carries Phosphoserine.

Belongs to the ADP-ribosylglycohydrolase family. As to expression, expressed in the embryonic heart at E11.5.

It localises to the cytoplasm. It is found in the myofibril. Its subcellular location is the sarcomere. Functionally, required for myofibril assembly and outgrowth of the cardiac chambers in the developing heart. Appears to be catalytically inactive, showing no activity against O-acetyl-ADP-ribose. In Mus musculus (Mouse), this protein is Inactive ADP-ribosyltransferase ARH2 (Adprhl1).